The primary structure comprises 243 residues: MSTNVTMRQMLEAGVHFGHQTRFWNPKMAKYIFGSRNKIHIINLEKTLPLFVEAQEYVRRLAANKGTVMFVGTKRQAREIVREEAARCGMPFVDHRWLGGMLTNYKTVKQSIKRLEEKRAILEGAGETGYNKKELLDLQREVEKLERSLGGIKDMKGLPDAIFVIDTGYQKGTIVEAKKLGIPVIGVVDTNNSPDGIDYVVPGNDDSSRAIRLYARGIADAVLEGRAHSLQEIVAAAETAQAE.

This sequence belongs to the universal ribosomal protein uS2 family.

The sequence is that of Small ribosomal subunit protein uS2 from Chromobacterium violaceum (strain ATCC 12472 / DSM 30191 / JCM 1249 / CCUG 213 / NBRC 12614 / NCIMB 9131 / NCTC 9757 / MK).